The sequence spans 439 residues: C4-dicarboxylate transport protein (439 aa).

The next 9 membrane-spanning stretches (helical) occupy residues 9–29 (HLYF…YYMP), 45–65 (MIKM…IAGM), 80–100 (LYFE…INVI), 150–170 (GEIL…SAMG), 186–206 (AFFG…FGAM), 221–241 (LGML…VVLG), 291–311 (VVGL…SIYL), 334–354 (ILGV…SGFV), and 357–377 (AATF…ILGI).

Belongs to the dicarboxylate/amino acid:cation symporter (DAACS) (TC 2.A.23) family.

The protein localises to the cell inner membrane. In terms of biological role, responsible for the transport of dicarboxylates such as succinate, fumarate, and malate from the periplasm across the membrane. This is C4-dicarboxylate transport protein from Citrifermentans bemidjiense (strain ATCC BAA-1014 / DSM 16622 / JCM 12645 / Bem) (Geobacter bemidjiensis).